We begin with the raw amino-acid sequence, 435 residues long: uncharacterized protein (435 aa).

S-adenosyl-L-methionine contacts are provided by Gln-261, Tyr-294, Glu-318, and Asp-366. Cys-393 serves as the catalytic Nucleophile.

Belongs to the class I-like SAM-binding methyltransferase superfamily. RNA M5U methyltransferase family.

This is an uncharacterized protein from Bifidobacterium longum (strain NCC 2705).